The following is a 173-amino-acid chain: Large ribosomal subunit protein uL10 (173 aa).

This sequence belongs to the universal ribosomal protein uL10 family. As to quaternary structure, part of the ribosomal stalk of the 50S ribosomal subunit. The N-terminus interacts with L11 and the large rRNA to form the base of the stalk. The C-terminus forms an elongated spine to which L12 dimers bind in a sequential fashion forming a multimeric L10(L12)X complex.

Its function is as follows. Forms part of the ribosomal stalk, playing a central role in the interaction of the ribosome with GTP-bound translation factors. This chain is Large ribosomal subunit protein uL10, found in Beutenbergia cavernae (strain ATCC BAA-8 / DSM 12333 / CCUG 43141 / JCM 11478 / NBRC 16432 / NCIMB 13614 / HKI 0122).